The primary structure comprises 434 residues: Trigger factor (434 aa).

Positions 160–245 constitute a PPIase FKBP-type domain; the sequence is GDKVKMNFVG…LTEVQAANLP (86 aa).

Belongs to the FKBP-type PPIase family. Tig subfamily.

The protein localises to the cytoplasm. The catalysed reaction is [protein]-peptidylproline (omega=180) = [protein]-peptidylproline (omega=0). Its function is as follows. Involved in protein export. Acts as a chaperone by maintaining the newly synthesized protein in an open conformation. Functions as a peptidyl-prolyl cis-trans isomerase. The chain is Trigger factor from Shewanella putrefaciens (strain CN-32 / ATCC BAA-453).